Consider the following 852-residue polypeptide: MADPEDPRDAGDVLGDDSFPLSSLANLFEVEDTPSPAEPSRGPPGAVDGKQNLRMKFHGAFRKGPPKPMELLESTIYESSVVPAPKKAPMDSLFDYGTYRQHPSENKRWRRRVVEKPVAGTKGPAPNPPPILKVFNRPILFDIVSRGSPDGLEGLLSFLLTHKKRLTDEEFREPSTGKTCLPKALLNLSAGRNDTIPILLDIAEKTGNMREFINSPFRDVYYRGQTALHIAIERRCKHYVELLVEKGADVHAQARGRFFQPKDEGGYFYFGELPLSLAACTNQPHIVHYLTENGHKQADLRRQDSRGNTVLHALVAIADNTRENTKFVTKMYDLLLIKCAKLFPDTNLEALLNNDGLSPLMMAAKTGKIGIFQHIIRREIADEDVRHLSRKFKDWAYGPVYSSLYDLSSLDTCGEEVSVLEILVYNSKIENRHEMLAVEPINELLRDKWRKFGAVSFYISVVSYLCAMIIFTLIAYYRPMEGPPPYPYTTTIDYLRLAGEIITLLTGILFFFSNIKDLFMKKCPGVNSFFIDGSFQLLYFIYSVLVIVTAGLYLGGVEAYLAVMVFALVLGWMNALYFTRGLKLTGTYSIMIQKILFKDLFRFLLVYLLFMIGYASALVSLLNPCPSSESCSEDHSNCTLPTYPSCRDSQTFSTFLLDLFKLTIGMGDLEMLESAKYPGVFIILLVTYIILTFVLLLNMLIALMGETVGQVSKESKHIWKLQWATTILDIERSFPLFLRRVFRSGEMVTVGKGTDGTPDRRWCFRVDEVNWSHWNQNLGIISEDPGKSDTYQYYGFSHTVGRLRRDRWSTVVPRVVELNKSCPTEDVVVPLGTMGTAEARERRHGQTPSSPL.

Residues 1–455 (MADPEDPRDA…RDKWRKFGAV (455 aa)) lie on the Cytoplasmic side of the membrane. The disordered stretch occupies residues 30 to 51 (VEDTPSPAEPSRGPPGAVDGKQ). Residues K178, K183, N187, 222–225 (YRGQ), and R234 each bind ATP. 2 ANK repeats span residues 223 to 252 (RGQT…DVHA) and 270 to 299 (FGEL…KQAD). Residues 235-237 (RCK), 282-285 (NQPH), and K330 each bind a 1,2-diacyl-sn-glycero-3-phospho-(1D-myo-inositol-4,5-bisphosphate). Residues 355–387 (DGLSPLMMAAKTGKIGIFQHIIRREIADEDVRH) form an ANK 3 repeat. The helical transmembrane segment at 456–476 (SFYISVVSYLCAMIIFTLIAY) threads the bilayer. Over 477-493 (YRPMEGPPPYPYTTTID) the chain is Extracellular. The chain crosses the membrane as a helical span at residues 494–520 (YLRLAGEIITLLTGILFFFSNIKDLFM). Residues 521–533 (KKCPGVNSFFIDG) are Cytoplasmic-facing. A helical membrane pass occupies residues 534–554 (SFQLLYFIYSVLVIVTAGLYL). At 555-558 (GGVE) the chain is on the extracellular side. Residues 559-579 (AYLAVMVFALVLGWMNALYFT) traverse the membrane as a helical segment. The Cytoplasmic portion of the chain corresponds to 580–594 (RGLKLTGTYSIMIQK). A helical transmembrane segment spans residues 595–622 (ILFKDLFRFLLVYLLFMIGYASALVSLL). Residues 623–651 (NPCPSSESCSEDHSNCTLPTYPSCRDSQT) lie on the Extracellular side of the membrane. The segment at residues 652–671 (FSTFLLDLFKLTIGMGDLEM) is an intramembrane region (pore-forming). Positions 665–668 (GMGD) match the Selectivity filter motif. D668 contributes to the Ca(2+) binding site. At 672–679 (LESAKYPG) the chain is on the extracellular side. Residues 680 to 708 (VFIILLVTYIILTFVLLLNMLIALMGETV) form a helical membrane-spanning segment. The Cytoplasmic segment spans residues 709-852 (GQVSKESKHI…RHGQTPSSPL (144 aa)).

This sequence belongs to the transient receptor (TC 1.A.4) family. TrpV subfamily. TRPV4 sub-subfamily. In terms of assembly, homotetramer. Interacts with Ca(2+)-calmodulin.

The protein localises to the apical cell membrane. Its subcellular location is the cell junction. It localises to the adherens junction. It carries out the reaction Ca(2+)(in) = Ca(2+)(out). ATP binding enhances channel sensitivity to agonists. Ca(2+)-calmodulin prevents the ATP-mediated increased sensitivity to agonists. In terms of biological role, non-selective calcium permeant cation channel involved in osmotic sensitivity and mechanosensitivity. Activation by exposure to hypotonicity within the physiological range exhibits an outward rectification. Also activated by phorbol esters. Channel activity seems to be regulated by a calmodulin-dependent mechanism. This Gallus gallus (Chicken) protein is Transient receptor potential cation channel subfamily V member 4 (TRPV4).